A 159-amino-acid polypeptide reads, in one-letter code: Transmembrane protein 89 (159 aa).

The first 24 residues, 1–24, serve as a signal peptide directing secretion; it reads MLHVLASLPLLLLLVTSASTHAWS. Residues 25–63 lie on the Extracellular side of the membrane; that stretch reads RPLWYQVGLDLQPWGCQPKSVEGCRGGLSCPGYWLGPGA. A helical membrane pass occupies residues 64-86; it reads SRIYPVAAVMITTTMLMICRKIL. Residues 87-159 are Cytoplasmic-facing; that stretch reads QGRRRSQATK…QIKGTSTQSG (73 aa). Residues 91–110 form a disordered region; that stretch reads RSQATKGEHPQVTTEPCGPW.

It localises to the membrane. This Homo sapiens (Human) protein is Transmembrane protein 89 (TMEM89).